The sequence spans 191 residues: Xanthine phosphoribosyltransferase (191 aa).

Xanthine is bound by residues Leu-20 and Asn-27. Residue 128 to 132 participates in 5-phospho-alpha-D-ribose 1-diphosphate binding; it reads ANGQA. Lys-156 contributes to the xanthine binding site.

This sequence belongs to the purine/pyrimidine phosphoribosyltransferase family. Xpt subfamily. In terms of assembly, homodimer.

It localises to the cytoplasm. It catalyses the reaction XMP + diphosphate = xanthine + 5-phospho-alpha-D-ribose 1-diphosphate. Its pathway is purine metabolism; XMP biosynthesis via salvage pathway; XMP from xanthine: step 1/1. Functionally, converts the preformed base xanthine, a product of nucleic acid breakdown, to xanthosine 5'-monophosphate (XMP), so it can be reused for RNA or DNA synthesis. This is Xanthine phosphoribosyltransferase from Limosilactobacillus reuteri (strain DSM 20016) (Lactobacillus reuteri).